The primary structure comprises 347 residues: Protein-glutamate methylesterase/protein-glutamine glutaminase 3 (347 aa).

Residues Q3–L120 form the Response regulatory domain. D54 is modified (4-aspartylphosphate). The CheB-type methylesterase domain maps to I159 to F347. Residues S171, H197, and D293 contribute to the active site.

It belongs to the CheB family. Post-translationally, phosphorylated by CheA. Phosphorylation of the N-terminal regulatory domain activates the methylesterase activity.

It is found in the cytoplasm. It catalyses the reaction [protein]-L-glutamate 5-O-methyl ester + H2O = L-glutamyl-[protein] + methanol + H(+). The catalysed reaction is L-glutaminyl-[protein] + H2O = L-glutamyl-[protein] + NH4(+). In terms of biological role, involved in chemotaxis. Part of a chemotaxis signal transduction system that modulates chemotaxis in response to various stimuli. Catalyzes the demethylation of specific methylglutamate residues introduced into the chemoreceptors (methyl-accepting chemotaxis proteins or MCP) by CheR. Also mediates the irreversible deamidation of specific glutamine residues to glutamic acid. The sequence is that of Protein-glutamate methylesterase/protein-glutamine glutaminase 3 from Leptospira interrogans serogroup Icterohaemorrhagiae serovar copenhageni (strain Fiocruz L1-130).